The chain runs to 328 residues: Homeobox protein DLX-2 (328 aa).

Composition is skewed to polar residues over residues 16–28 (QIAASSTYHQHQQ) and 52–72 (ESPTLPVSTATDSSYYTNQQH). Disordered stretches follow at residues 16–81 (QIAA…GGGG), 211–270 (WKSG…SSPS), and 300–328 (LHPTQTPQPHHHHHHHGGGGAPVSAGTIF). Residues 152–211 (VRKPRTIYSSFQLAALQRRFQKTQYLALPERAELAASLGLTQTQVKIWFQNRRSKFKKMW) constitute a DNA-binding region (homeobox). S232 is subject to Phosphoserine. A compositionally biased stretch (gly residues) spans 250–264 (AGGGGPGSGGSGAGS).

The protein belongs to the distal-less homeobox family. As to quaternary structure, interacts (via homeobox DNA-binding domain) with POU4F2; this interaction enhances retinal ganglion cell (RGC) differentiation.

Its subcellular location is the nucleus. In terms of biological role, acts as a transcriptional activator. Activates transcription of CGA/alpha-GSU, via binding to the downstream activin regulatory element (DARE) in the gene promoter. Plays a role in terminal differentiation of interneurons, such as amacrine and bipolar cells in the developing retina. Likely to play a regulatory role in the development of the ventral forebrain. May play a role in craniofacial patterning and morphogenesis. The chain is Homeobox protein DLX-2 (DLX2) from Homo sapiens (Human).